The following is a 561-amino-acid chain: MACPF domain-containing protein CAD1 (561 aa).

Residues 11-314 enclose the MACPF domain; sequence VPSSEALTTT…PPIEDLQYFL (304 aa). Residues 489–514 are disordered; it reads VASSGRLEPGGPSTSSSTEEVSGQSG. Residues 500-513 show a composition bias toward polar residues; sequence PSTSSSTEEVSGQS.

This sequence belongs to the complement C6/C7/C8/C9 (TC 1.C.39) family. As to expression, mainly expressed in the vascular system.

In terms of biological role, negatively controls the salicylic acid (SA)-mediated pathway of programmed cell death in plant immunity. In Arabidopsis thaliana (Mouse-ear cress), this protein is MACPF domain-containing protein CAD1 (CAD1).